We begin with the raw amino-acid sequence, 333 residues long: MNIGQRYGWEFALAVLLVMEILLFGIANPRMLDINILLFSTSDFICIGIVALPLTMVIVSGGIDISFGSTIGLCAISLGVMNQADIPMAAAIPLTLNVGAMCGIINAALILYTGVNPLVITLGTLYLFGGSALLLSGIFGATGYEGIGGFPQAFTDFANLTLLGLPVPLAMFIICVLVFWLFMHRTHSGRNIFLIGQNNKAAYYTAIPVARTLYFIYSLTGIAAAIAAIVLVSYFGSARSDLGSSFLMPAITAVVLGGANIYGGSGSIIGTALAMLLIGYLQQGLQMIGIPNQISSALSGALLIIAVVGRSISLHRHQIRGWMQRRRNQKLPS.

The next 10 helical transmembrane spans lie at 7–27, 45–65, 70–90, 91–111, 119–139, 162–182, 212–232, 240–260, 261–281, and 288–308; these read YGWE…FGIA, ICIG…GIDI, TIGL…PMAA, AIPL…ALIL, VITL…SGIF, LLGL…FWLF, TLYF…IVLV, SDLG…GGAN, IYGG…IGYL, and IGIP…IAVV.

It belongs to the binding-protein-dependent transport system permease family. AraH/RbsC subfamily. In terms of assembly, the complex is composed of two ATP-binding proteins (LsrA), two transmembrane proteins (LsrC and LsrD) and a solute-binding protein (LsrB).

Its subcellular location is the cell inner membrane. In terms of biological role, part of the ABC transporter complex LsrABCD involved in autoinducer 2 (AI-2) import. Probably responsible for the translocation of the substrate across the membrane. This Photorhabdus temperata protein is Autoinducer 2 import system permease protein LsrD (lsrD).